The primary structure comprises 922 residues: Non-centrosomal microtubule array protein 1 (922 aa).

Over residues 1–10 (MSNERVSTGS) the composition is skewed to polar residues. Disordered stretches follow at residues 1 to 134 (MSNE…HLPP), 250 to 277 (PVRLRKRGDTSRRDAVEAGFEPRDTVPR), 465 to 491 (KSRHLSESRDEMRGGAERRGSGGQMNL), and 533 to 563 (TQKEQSSHSTPSQSRHSSSKSSHFNGSSNLS). Composition is skewed to basic and acidic residues over residues 43-54 (SMERKDMPDRPK) and 70-94 (PKDRSSDSGDGDSPRPRKFSSKECA). Residues 99 to 113 (SNTSSEHSSRSNSST) show a composition bias toward low complexity. 2 stretches are compositionally biased toward basic and acidic residues: residues 256 to 276 (RGDTSRRDAVEAGFEPRDTVP) and 468 to 484 (HLSESRDEMRGGAERRG). A compositionally biased stretch (low complexity) spans 539 to 563 (SHSTPSQSRHSSSKSSHFNGSSNLS). Positions 564–728 (TSEQLRLQEM…RSVSTLRLEQ (165 aa)) form a coiled coil.

Its subcellular location is the cytoplasm. It is found in the cytoskeleton. It localises to the apical cell membrane. The protein localises to the cell junction. The protein resides in the hemidesmosome. Its subcellular location is the adherens junction. Functionally, plays a role in the assembly of microtubule arrays in the germline acting redundantly with ptrn-1 to control circumferential microtubule assembly along the body which is necessary for larval development, viability, and morphology and integrity of the epidermis. Required for microtubule stability and anchorage by binding to microtubule minus ends. Recruited to hemidesomosomes in early embryonic elongation to direct the nucleation and growth of non-centrosomal microtubules. Required for normal nuclear migration in the embryonic epidermis. Its function is as follows. Directs the assembly of non-centrosomal microtubule arrays that determine the position of nuclei within intracellular compartments in the epidermis and this is independent of ptrn-1 activity. This is Non-centrosomal microtubule array protein 1 from Caenorhabditis elegans.